Here is a 231-residue protein sequence, read N- to C-terminus: 7-cyano-7-deazaguanine synthase (231 aa).

11–21 contributes to the ATP binding site; sequence LSGGLDSATTM. Residues cysteine 195, cysteine 205, cysteine 208, and cysteine 211 each contribute to the Zn(2+) site.

Belongs to the QueC family. Requires Zn(2+) as cofactor.

It catalyses the reaction 7-carboxy-7-deazaguanine + NH4(+) + ATP = 7-cyano-7-deazaguanine + ADP + phosphate + H2O + H(+). Its pathway is purine metabolism; 7-cyano-7-deazaguanine biosynthesis. Its function is as follows. Catalyzes the ATP-dependent conversion of 7-carboxy-7-deazaguanine (CDG) to 7-cyano-7-deazaguanine (preQ(0)). This chain is 7-cyano-7-deazaguanine synthase, found in Syntrophus aciditrophicus (strain SB).